The chain runs to 63 residues: Large ribosomal subunit protein uL30 (63 aa).

This sequence belongs to the universal ribosomal protein uL30 family. As to quaternary structure, part of the 50S ribosomal subunit.

The polypeptide is Large ribosomal subunit protein uL30 (Chlorobium chlorochromatii (strain CaD3)).